A 409-amino-acid chain; its full sequence is Arginine biosynthesis bifunctional protein ArgJ (409 aa).

Positions 157, 183, 194, 281, 404, and 409 each coordinate substrate. Catalysis depends on threonine 194, which acts as the Nucleophile.

It belongs to the ArgJ family. As to quaternary structure, heterotetramer of two alpha and two beta chains.

It localises to the cytoplasm. It catalyses the reaction N(2)-acetyl-L-ornithine + L-glutamate = N-acetyl-L-glutamate + L-ornithine. It carries out the reaction L-glutamate + acetyl-CoA = N-acetyl-L-glutamate + CoA + H(+). It participates in amino-acid biosynthesis; L-arginine biosynthesis; L-ornithine and N-acetyl-L-glutamate from L-glutamate and N(2)-acetyl-L-ornithine (cyclic): step 1/1. It functions in the pathway amino-acid biosynthesis; L-arginine biosynthesis; N(2)-acetyl-L-ornithine from L-glutamate: step 1/4. Functionally, catalyzes two activities which are involved in the cyclic version of arginine biosynthesis: the synthesis of N-acetylglutamate from glutamate and acetyl-CoA as the acetyl donor, and of ornithine by transacetylation between N(2)-acetylornithine and glutamate. The chain is Arginine biosynthesis bifunctional protein ArgJ from Zymomonas mobilis subsp. mobilis (strain ATCC 31821 / ZM4 / CP4).